A 494-amino-acid polypeptide reads, in one-letter code: Guanosine-5'-triphosphate,3'-diphosphate pyrophosphatase (494 aa).

The protein belongs to the GppA/Ppx family. GppA subfamily.

It carries out the reaction guanosine 3'-diphosphate 5'-triphosphate + H2O = guanosine 3',5'-bis(diphosphate) + phosphate + H(+). Its pathway is purine metabolism; ppGpp biosynthesis; ppGpp from GTP: step 2/2. Catalyzes the conversion of pppGpp to ppGpp. Guanosine pentaphosphate (pppGpp) is a cytoplasmic signaling molecule which together with ppGpp controls the 'stringent response', an adaptive process that allows bacteria to respond to amino acid starvation, resulting in the coordinated regulation of numerous cellular activities. The sequence is that of Guanosine-5'-triphosphate,3'-diphosphate pyrophosphatase from Escherichia fergusonii (strain ATCC 35469 / DSM 13698 / CCUG 18766 / IAM 14443 / JCM 21226 / LMG 7866 / NBRC 102419 / NCTC 12128 / CDC 0568-73).